A 234-amino-acid polypeptide reads, in one-letter code: Synaptogyrin-1 (234 aa).

M1 is subject to N-acetylmethionine. At 1–23 (MEGGAYGAGKAGGAFDPYTLVRQ) the chain is on the cytoplasmic side. Residues 20–173 (LVRQPHTILR…QAVLAFQRYQ (154 aa)) enclose the MARVEL domain. The helical transmembrane segment at 24 to 44 (PHTILRVVSWVFSIVVFGSIV) threads the bilayer. Residues 45 to 71 (NEGYLNNPEEEEEFCIYNRNPNACSYG) are Lumenal-facing. A helical transmembrane segment spans residues 72–92 (VTVGVLAFLTCLVYLALDVYF). Topologically, residues 93–104 (PQISSVKDRKKA) are cytoplasmic. Residues 105-125 (VLSDIGVSAFWAFFWFVGFCF) form a helical membrane-spanning segment. The Lumenal segment spans residues 126-148 (LANQWQVSKPKDNPLNEGTDAAR). A helical transmembrane segment spans residues 149 to 169 (AAIAFSFFSIFTWAGQAVLAF). Over 170 to 234 (QRYQIGADSA…EPQGYQSQGY (65 aa)) the chain is Cytoplasmic. Positions 201 to 234 (EPSAGSDPTGMGGTYQHPANAFDAEPQGYQSQGY) are disordered.

It belongs to the synaptogyrin family. Nervous system (at protein level).

The protein localises to the cytoplasmic vesicle. It localises to the secretory vesicle. Its subcellular location is the synaptic vesicle membrane. It is found in the melanosome. Functionally, may play a role in regulated exocytosis. Modulates the localization of synaptophysin/SYP into synaptic-like microvesicles and may therefore play a role in synaptic-like microvesicle formation and/or maturation. Involved in the regulation of short-term and long-term synaptic plasticity. In Rattus norvegicus (Rat), this protein is Synaptogyrin-1.